We begin with the raw amino-acid sequence, 436 residues long: Drebrin-like protein (436 aa).

Residues 2–133 (AVNLSRNGPA…EPECIMEKVA (132 aa)) form the ADF-H domain. Position 26 is a phosphothreonine (T26). Phosphoserine is present on S160. K176 carries the N6-acetyllysine modification. A coiled-coil region spans residues 178–232 (NFWAKAEKEEENRRLEEKRRAEEEKQRLEEERRERELQEAARREQRYQEQHRSAG). Basic and acidic residues-rich tracts occupy residues 185–229 (KEEE…EQHR) and 264–275 (HPREIFKQKERA). The disordered stretch occupies residues 185–371 (KEEENRRLEE…GSGHIDNYMQ (187 aa)). The span at 276–286 (MSTTSVSSSQP) shows a compositional bias: polar residues. S277, S280, S283, and S291 each carry phosphoserine. The residue at position 296 (K296) is an N6-acetyllysine. Residue T299 is modified to Phosphothreonine. A Phosphoserine modification is found at S311. Y340 and Y350 each carry phosphotyrosine. The SH3 domain occupies 377–436 (GQGLCARALYDYQAADDTEISFDPENLITGIEVIDEGWWRGYGPDGHFGMFPANYVELIE).

This sequence belongs to the ABP1 family. As to quaternary structure, interacts with FGD1, MAP4K1 and PRAM1. Interacts with ANKRD54. Interacts with WASL and WIPF1. Interacts with SHANK2 and SHANK3. Interacts with both COBL and PACSIN1. Interacts with DNM1 and SYN1. In terms of tissue distribution, detected in brain (at protein level). Widely expressed in brain with highest levels in hippocampus and cerebral cortex. Located primarily in dendrites and, in moderate amounts, in cell bodies. Isoform 1 and isoform 3 are the predominant isoforms in brain.

Its subcellular location is the cytoplasm. It is found in the cytoskeleton. It localises to the cell projection. The protein resides in the lamellipodium. The protein localises to the ruffle. Its subcellular location is the cell cortex. It is found in the cytosol. It localises to the cell membrane. The protein resides in the synapse. The protein localises to the perikaryon. Its subcellular location is the neuron projection. It is found in the dendrite. It localises to the postsynaptic density. The protein resides in the golgi apparatus membrane. The protein localises to the cytoplasmic vesicle. Its subcellular location is the clathrin-coated vesicle membrane. It is found in the podosome. It localises to the early endosome. Adapter protein that binds F-actin and DNM1, and thereby plays a role in receptor-mediated endocytosis. Required for the formation of organized podosome rosettes. May act as a common effector of antigen receptor-signaling pathways in leukocytes. Acts as a key component of the immunological synapse that regulates T-cell activation by bridging TCRs and the actin cytoskeleton to gene activation and endocytic processes. Plays a role in the reorganization of the actin cytoskeleton, formation of cell projections, such as neurites, in neuron morphogenesis and synapse formation via its interaction with WASL and COBL. Does not bind G-actin and promote actin polymerization by itself. This Rattus norvegicus (Rat) protein is Drebrin-like protein.